Reading from the N-terminus, the 483-residue chain is Cobyric acid synthase (483 aa).

A GATase cobBQ-type domain is found at 252–439 (KLNVVVPVLT…LHGFFDEAEA (188 aa)). Catalysis depends on cysteine 333, which acts as the Nucleophile. The active site involves histidine 431.

This sequence belongs to the CobB/CobQ family. CobQ subfamily.

It participates in cofactor biosynthesis; adenosylcobalamin biosynthesis. Catalyzes amidations at positions B, D, E, and G on adenosylcobyrinic A,C-diamide. NH(2) groups are provided by glutamine, and one molecule of ATP is hydrogenolyzed for each amidation. This chain is Cobyric acid synthase, found in Vibrio parahaemolyticus serotype O3:K6 (strain RIMD 2210633).